The sequence spans 304 residues: DnaJ homolog subfamily C member 17 (304 aa).

The J domain occupies 11-76; that stretch reads DLYALLGIEE…AARAAYDKVR (66 aa). Residues 79 to 106 are compositionally biased toward basic and acidic residues; the sequence is KKQAAERTQKLDEKRKKVKLDLEARERQ. A disordered region spans residues 79–145; the sequence is KKQAAERTQK…SRQLEEQQRL (67 aa). S112 carries the phosphoserine modification. The span at 118–145 shows a compositional bias: basic and acidic residues; it reads SRSTRTLEQEIERLREEGSRQLEEQQRL. The region spanning 178–249 is the RRM domain; that stretch reads KCKKEDESKG…NPLKISWLEG (72 aa). Residue K264 is modified to N6-methyllysine.

The protein localises to the cytoplasm. The protein resides in the nucleus. May negatively affect PAX8-induced thyroglobulin/TG transcription. The protein is DnaJ homolog subfamily C member 17 (DNAJC17) of Homo sapiens (Human).